The sequence spans 819 residues: Pentatricopeptide repeat-containing protein At5g02860 (819 aa).

The interval 57-93 is disordered; sequence QNPNSRQPISSQTSRNRNRTRIGKSRDPNLGKPWSYH. 18 PPR repeats span residues 172 to 206, 207 to 241, 242 to 277, 278 to 312, 313 to 347, 348 to 382, 383 to 417, 418 to 452, 453 to 487, 488 to 522, 523 to 557, 558 to 592, 593 to 627, 628 to 662, 663 to 697, 698 to 732, 733 to 767, and 768 to 802; these read DNSV…GFSL, DVYS…GCKP, TLIT…GIAP, DAYT…GFSY, DKVT…GFSP, SIVT…GTKP, DVFT…GCKP, NICT…GLSP, DIVT…GFVP, ERET…GVTP, DLST…RCKP, NELT…VIEP, RAVL…GFSP, DITT…GFTP, SMAT…GIKP, DIIS…GIVP, DVIT…GCRP, and NQNT…DPHA.

It belongs to the PPR family. P subfamily.

This chain is Pentatricopeptide repeat-containing protein At5g02860, found in Arabidopsis thaliana (Mouse-ear cress).